The chain runs to 331 residues: METDSFKRQYADILRRYLCGISYQKLSCEYDPSIEETVVQHFRTLNFPNDFLKRMMPIIHASAWIATSTYPFTPRHVQEAIAVYTSLAIAIEDTSKESTHDLKRFQQRLFNRQPQPNLLLQAMVDCLVSLRGIYGPFICDMVAKSTAEYISVCAFEAKYDGTLRPTPSSPDFPYYLRLKTGVAEVYAFFAFPEVLYPEEAFLHEYILAVPDISRYFNLGNDLLSFYKESIVADERLNYIYNCSRVSNSTPLESIWSTHLALITCVENIRKTLSASPQMRRNIDQLINGYVMYHFGASRYKLSDLGIQEVDELRAKICCSTTVDNGVGAYKH.

This sequence belongs to the trichodiene synthase family.

It carries out the reaction (2E,6E)-farnesyl diphosphate = (E)-beta-farnesene + diphosphate. In terms of biological role, terpene synthase that catalyzes the conversion of (2E,6E)-farnesyl diphosphate (FPP) into the volatile sesquiterpene (E)-beta-farnesene. This is (E)-beta farnesene synthase MBR_03882 from Metarhizium brunneum (strain ARSEF 3297).